The following is a 406-amino-acid chain: MLRYPYFYRTYNRLFSHFVDSGASNLDVCPHTIHTAVALHTESKAVEGTALCGPQKVYSSEEKELEAMAKLHIPVMVDQVVHCLAPQKGQVFLDMTFGSGGHTRAILQKEPDVMVYALDRDPVAYAIAEQLSRLYPTQIQALLGQFSQAEALLMKAGVQPGTIDGILMDLGCSSMQLDAPERGFSLRKDGPLDMRMDGDRYPDTPTASDVVNALDQQALASILRAYGEEKHAKKIASAIIQARSTYPISRTQQLASIVAGAFPPSAVYARKDLLQRSTHIATKTFQALRIFVNNELNELYAGLRTAEKFLKTGGRLVALSFHSLEDRIVKRFLLGISMTERFNLSIRQKVKQTSQLDSDQETEERHSVRAPLKWELIHKKVLTPEDQDVQDNPRGRSAKLRAAIKL.

Residues 1–22 (MLRYPYFYRTYNRLFSHFVDSG) constitute a mitochondrion transit peptide. S-adenosyl-L-methionine-binding positions include 100-102 (GGH), Asp119, Phe146, Asp169, and Gln176. Ser358 carries the phosphoserine modification.

The protein belongs to the methyltransferase superfamily. RsmH family.

It localises to the mitochondrion matrix. It catalyses the reaction cytidine(839) in 12S rRNA + S-adenosyl-L-methionine = N(4)-methylcytidine(839) in 12S rRNA + S-adenosyl-L-homocysteine + H(+). Its function is as follows. N4-methylcytidine (m4C) methyltransferase responsible for the methylation of position C839 in mitochondrial 12S rRNA. Involved in the stabilization of 12S rRNA folding, therefore facilitating the assembly of the mitochondrial small ribosomal subunits. In Mus musculus (Mouse), this protein is 12S rRNA N(4)-cytidine methyltransferase METTL15.